The following is a 153-amino-acid chain: MAANCERTFIAIKPDGVQRGLVGEIIKRFEQKGFRLVGMKFVHASEELLKQHYIDLKDRPFYPGLVKYMNSGPIVAMVWEGLNVVKTGRVMLGETNPADSKPGTIRGDFCIQVGRNIIHGSDSVESAQKEINLWFKPAELIDFKSCAHDWIYE.

ATP-binding residues include Lys-13, Phe-61, Arg-89, Thr-95, Arg-106, and Asn-116. His-119 serves as the catalytic Pros-phosphohistidine intermediate.

It belongs to the NDK family. The cofactor is Mg(2+). Highest levels in the liver and kidney with lower levels in the heart, brain and breast muscle.

The protein resides in the cytoplasm. Its subcellular location is the cell membrane. The enzyme catalyses a 2'-deoxyribonucleoside 5'-diphosphate + ATP = a 2'-deoxyribonucleoside 5'-triphosphate + ADP. The catalysed reaction is a ribonucleoside 5'-diphosphate + ATP = a ribonucleoside 5'-triphosphate + ADP. Functionally, major role in the synthesis of nucleoside triphosphates other than ATP. The ATP gamma phosphate is transferred to the NDP beta phosphate via a ping-pong mechanism, using a phosphorylated active-site intermediate. The protein is Nucleoside diphosphate kinase of Columba livia (Rock dove).